A 371-amino-acid chain; its full sequence is Anhydro-N-acetylmuramic acid kinase (371 aa).

12-20 (GTVLDGNID) contributes to the ATP binding site.

It belongs to the anhydro-N-acetylmuramic acid kinase family.

It carries out the reaction 1,6-anhydro-N-acetyl-beta-muramate + ATP + H2O = N-acetyl-D-muramate 6-phosphate + ADP + H(+). It participates in amino-sugar metabolism; 1,6-anhydro-N-acetylmuramate degradation. It functions in the pathway cell wall biogenesis; peptidoglycan recycling. Its function is as follows. Catalyzes the specific phosphorylation of 1,6-anhydro-N-acetylmuramic acid (anhMurNAc) with the simultaneous cleavage of the 1,6-anhydro ring, generating MurNAc-6-P. Is required for the utilization of anhMurNAc either imported from the medium or derived from its own cell wall murein, and thus plays a role in cell wall recycling. The protein is Anhydro-N-acetylmuramic acid kinase of Mesorhizobium japonicum (strain LMG 29417 / CECT 9101 / MAFF 303099) (Mesorhizobium loti (strain MAFF 303099)).